A 452-amino-acid polypeptide reads, in one-letter code: tRNA modification GTPase MnmE (452 aa).

Residues Arg21, Glu78, and Lys118 each contribute to the (6S)-5-formyl-5,6,7,8-tetrahydrofolate site. Positions 214–375 constitute a TrmE-type G domain; it reads GMKVVIAGRP…LRDHLKQAMG (162 aa). Asn224 is a binding site for K(+). GTP is bound by residues 224–229, 243–249, and 268–271; these read NAGKSS, TDIAGTT, and DTAG. Ser228 contributes to the Mg(2+) binding site. Thr243, Ile245, and Thr248 together coordinate K(+). Residue Thr249 participates in Mg(2+) binding. Lys452 contributes to the (6S)-5-formyl-5,6,7,8-tetrahydrofolate binding site.

This sequence belongs to the TRAFAC class TrmE-Era-EngA-EngB-Septin-like GTPase superfamily. TrmE GTPase family. As to quaternary structure, homodimer. Heterotetramer of two MnmE and two MnmG subunits. K(+) serves as cofactor.

It localises to the cytoplasm. In terms of biological role, exhibits a very high intrinsic GTPase hydrolysis rate. Involved in the addition of a carboxymethylaminomethyl (cmnm) group at the wobble position (U34) of certain tRNAs, forming tRNA-cmnm(5)s(2)U34. The chain is tRNA modification GTPase MnmE from Haemophilus influenzae (strain 86-028NP).